We begin with the raw amino-acid sequence, 86 residues long: Class II hydrophobin 2 (86 aa).

An N-terminal signal peptide occupies residues 1–15 (MQFFAVALFATSALA). 4 cysteine pairs are disulfide-bonded: Cys-18–Cys-67, Cys-28–Cys-58, Cys-29–Cys-41, and Cys-68–Cys-79.

The protein belongs to the cerato-ulmin hydrophobin family. As to quaternary structure, homodimer. Homodimers further self-assemble to form highly ordered films at water-air interfaces through intermolecular interactions.

It localises to the secreted. The protein resides in the spore wall. The protein localises to the cell wall. In terms of biological role, aerial growth, conidiation, and dispersal of filamentous fungi in the environment rely upon a capability of their secreting small amphipathic proteins called hydrophobins (HPBs) with low sequence identity. Class I can self-assemble into an outermost layer of rodlet bundles on aerial cell surfaces, conferring cellular hydrophobicity that supports fungal growth, development and dispersal; whereas Class II form highly ordered films at water-air interfaces through intermolecular interactions but contribute nothing to the rodlet structure. Hbf2 is a class II hydrophobin that is involved in sporuration. The polypeptide is Class II hydrophobin 2 (Hypocrea jecorina (Trichoderma reesei)).